We begin with the raw amino-acid sequence, 600 residues long: NADH-quinone oxidoreductase subunit C/D (600 aa).

The tract at residues 1–190 (MVNNMTDLTA…SPFELTKAKQ (190 aa)) is NADH dehydrogenase I subunit C. An NADH dehydrogenase I subunit D region spans residues 214–600 (DFMFLNLGPN…IDFVMSDVDR (387 aa)).

It in the N-terminal section; belongs to the complex I 30 kDa subunit family. This sequence in the C-terminal section; belongs to the complex I 49 kDa subunit family. NDH-1 is composed of 13 different subunits. Subunits NuoB, CD, E, F, and G constitute the peripheral sector of the complex.

The protein resides in the cell inner membrane. The catalysed reaction is a quinone + NADH + 5 H(+)(in) = a quinol + NAD(+) + 4 H(+)(out). Functionally, NDH-1 shuttles electrons from NADH, via FMN and iron-sulfur (Fe-S) centers, to quinones in the respiratory chain. The immediate electron acceptor for the enzyme in this species is believed to be ubiquinone. Couples the redox reaction to proton translocation (for every two electrons transferred, four hydrogen ions are translocated across the cytoplasmic membrane), and thus conserves the redox energy in a proton gradient. The chain is NADH-quinone oxidoreductase subunit C/D from Shigella boydii serotype 18 (strain CDC 3083-94 / BS512).